Here is a 75-residue protein sequence, read N- to C-terminus: Dermaseptin-related peptide (75 aa).

Positions 1–22 are cleaved as a signal peptide; that stretch reads MAFLNKSLLLVLFLGLVSLSIC. Residues 23–43 constitute a propeptide that is removed on maturation; it reads EEERRENEDEEEQEDDEQSEM. The interval 24–44 is disordered; that stretch reads EERRENEDEEEQEDDEQSEMR. Acidic residues predominate over residues 30–40; that stretch reads EDEEEQEDDEQ. Glutamine 72 bears the Glutamine amide mark. Positions 74–75 are excised as a propeptide; the sequence is EQ.

In terms of tissue distribution, expressed by the skin glands.

The protein localises to the secreted. In terms of biological role, has antibacterial activity against Gram-positive bacterium M.luteus NCT C2665 but not against Gram-negative bacterium E.coli K12D31. The protein is Dermaseptin-related peptide of Agalychnis callidryas (Red-eyed tree frog).